Consider the following 319-residue polypeptide: tRNA U34 carboxymethyltransferase (319 aa).

Carboxy-S-adenosyl-L-methionine-binding positions include K88, W102, K107, G126, 176-177 (LE), M192, Y196, and R311.

Belongs to the class I-like SAM-binding methyltransferase superfamily. CmoB family. In terms of assembly, homotetramer.

It carries out the reaction carboxy-S-adenosyl-L-methionine + 5-hydroxyuridine(34) in tRNA = 5-carboxymethoxyuridine(34) in tRNA + S-adenosyl-L-homocysteine + H(+). In terms of biological role, catalyzes carboxymethyl transfer from carboxy-S-adenosyl-L-methionine (Cx-SAM) to 5-hydroxyuridine (ho5U) to form 5-carboxymethoxyuridine (cmo5U) at position 34 in tRNAs. The sequence is that of tRNA U34 carboxymethyltransferase from Azotobacter vinelandii (strain DJ / ATCC BAA-1303).